The chain runs to 492 residues: Virion host shutoff protein (492 aa).

4 disordered regions span residues 110–130 (EEAS…SRPS), 143–165 (FAPG…GAPS), 288–307 (SQAR…LESM), and 334–369 (EDDY…PPEL). Positions 144–165 (APGDRGTRAAGPGPAAPSGAPS) are enriched in low complexity.

This sequence belongs to the herpesviridae VHS protein family. Interacts with human EIF4H, EIF4A1 and EIF4A2; interaction with eIF4AI and EIF4A2 presumably allows Vhs protein to associate with the eIF4F cap-binding complex.

Its subcellular location is the virion. In terms of biological role, minor structural protein that acts as an endoribonuclease during lytic infection. Degrades host mRNAs in the cytoplasm by cutting them at preferred sites, including some in regions of translation initiation. Together with inhibition of host splicing by ICP27, contributes to an overall decrease in host protein synthesis. Also, after the onset of viral transcription, accelerates the turnover of viral mRNA, thereby facilitating the sequential expression of different classes of viral genes. Binds translation initiation factors eIF4H, eIF4AI, and eIF4AII, thereby may interact directly with the translation initiation complex and thus digest specifically mRNAs. Also impedes antigen presentation by major histocompatibility complex class I and class II molecules, inhibits secretion of cytokines that would otherwise recruit lymphocytes and neutrophils cells to the site of infection and blocks the activation of dendritic cells. Impedes the alpha/beta interferon-mediated response to infection. Inhibits the integrated stress response (ISR) in the infected cell, this function requires the endonuclease activity. Stress granule formation is thus inhibited, which allows protein synthesis and viral replication. In Human herpesvirus 2 (strain G) (HHV-2), this protein is Virion host shutoff protein (UL41).